Reading from the N-terminus, the 263-residue chain is Hydroxyethylthiazole kinase 1 (263 aa).

Substrate is bound at residue Met42. ATP is bound by residues Lys118 and Thr164. Gly191 serves as a coordination point for substrate.

The protein belongs to the Thz kinase family. Mg(2+) serves as cofactor.

The catalysed reaction is 5-(2-hydroxyethyl)-4-methylthiazole + ATP = 4-methyl-5-(2-phosphooxyethyl)-thiazole + ADP + H(+). Its pathway is cofactor biosynthesis; thiamine diphosphate biosynthesis; 4-methyl-5-(2-phosphoethyl)-thiazole from 5-(2-hydroxyethyl)-4-methylthiazole: step 1/1. In terms of biological role, catalyzes the phosphorylation of the hydroxyl group of 4-methyl-5-beta-hydroxyethylthiazole (THZ). The sequence is that of Hydroxyethylthiazole kinase 1 from Clostridium botulinum (strain Langeland / NCTC 10281 / Type F).